The following is a 443-amino-acid chain: Chromosomal replication initiator protein DnaA (443 aa).

The domain I, interacts with DnaA modulators stretch occupies residues 1–75 (MNTQLNEIWQ…AIKQVTFKEY (75 aa)). Residues 75 to 105 (YEIAFIVPSQENLNKLTKQTESAGNEDSPLS) are domain II. The domain III, AAA+ region stretch occupies residues 106 to 321 (VLNPKYTFDT…GALNRVIAYS (216 aa)). ATP contacts are provided by glycine 150, glycine 152, lysine 153, and threonine 154. The segment at 322–443 (SLTENEITVE…SEIKRNLLGK (122 aa)) is domain IV, binds dsDNA.

This sequence belongs to the DnaA family. As to quaternary structure, oligomerizes as a right-handed, spiral filament on DNA at oriC.

The protein resides in the cytoplasm. Its function is as follows. Plays an essential role in the initiation and regulation of chromosomal replication. ATP-DnaA binds to the origin of replication (oriC) to initiate formation of the DNA replication initiation complex once per cell cycle. Binds the DnaA box (a 9 base pair repeat at the origin) and separates the double-stranded (ds)DNA. Forms a right-handed helical filament on oriC DNA; dsDNA binds to the exterior of the filament while single-stranded (ss)DNA is stabiized in the filament's interior. The ATP-DnaA-oriC complex binds and stabilizes one strand of the AT-rich DNA unwinding element (DUE), permitting loading of DNA polymerase. After initiation quickly degrades to an ADP-DnaA complex that is not apt for DNA replication. Binds acidic phospholipids. The sequence is that of Chromosomal replication initiator protein DnaA from Acetivibrio thermocellus (strain ATCC 27405 / DSM 1237 / JCM 9322 / NBRC 103400 / NCIMB 10682 / NRRL B-4536 / VPI 7372) (Clostridium thermocellum).